Consider the following 321-residue polypeptide: Olfactory receptor 14J1 (321 aa).

Residues 1-23 are Extracellular-facing; sequence MVNLTSMSGFLLMGFSDERKLQI. N-linked (GlcNAc...) asparagine glycosylation occurs at N3. The chain crosses the membrane as a helical span at residues 24 to 44; that stretch reads LHALVFLVTYLLALTGNLLII. Residues 45–52 lie on the Cytoplasmic side of the membrane; it reads TIITVDRR. Residues 53–73 form a helical membrane-spanning segment; the sequence is LHSPMYYFLKHLSLLDLCFIS. The Extracellular portion of the chain corresponds to 74-97; it reads VTVPQSIANSLMGNGYISLVQCIL. C95 and C187 are oxidised to a cystine. The chain crosses the membrane as a helical span at residues 98 to 118; it reads QVFFFIALASSEVAILTVMSY. The Cytoplasmic portion of the chain corresponds to 119–137; it reads DRYAAICQPLHYETIMDPR. The chain crosses the membrane as a helical span at residues 138–158; sequence ACRHAVIAVWIAGGLSGLMHA. Residues 159–194 lie on the Extracellular side of the membrane; the sequence is AINFSIPLCGKRVIHQFFCDVPQMLKLACSYEFINE. The helical transmembrane segment at 195 to 215 threads the bilayer; sequence IALAAFTTSAAFICLISIVLS. Residues 216–235 are Cytoplasmic-facing; the sequence is YIRIFSTVLRIPSAEGRTKV. A helical membrane pass occupies residues 236–256; sequence FSTCLPHLFVATFFLSAAGFE. The Extracellular portion of the chain corresponds to 257-269; it reads FLRLPSDSSSTVD. Residues 270–290 traverse the membrane as a helical segment; sequence LVFSVFYTVIPPTLNPVIYSL. The Cytoplasmic segment spans residues 291-321; that stretch reads RNDSMKAALRKMLSKEELPQRKMCLKAMFKL.

The protein belongs to the G-protein coupled receptor 1 family.

It is found in the cell membrane. Functionally, odorant receptor. This is Olfactory receptor 14J1 (OR14J1) from Homo sapiens (Human).